Reading from the N-terminus, the 236-residue chain is Cutinase (236 aa).

A signal peptide spans 1 to 20 (MSLTLFSFLSLVSILCIVTA). The cysteines at positions 66 and 143 are disulfide-linked. S154 acts as the Nucleophile in catalysis. C202 and C209 form a disulfide bridge. D206 is an active-site residue. The active-site Proton donor/acceptor is H218.

This sequence belongs to the cutinase family. The 2 disulfide bonds play a critical role in holding the catalytic residues in juxta-position; reduction of the disulfide bridges results in the complete inactivation of the enzyme.

The protein resides in the secreted. It catalyses the reaction cutin + H2O = cutin monomers.. Catalyzes the hydrolysis of complex carboxylic polyesters found in the cell wall of plants. Degrades cutin, a macromolecule that forms the structure of the plant cuticle. Allows pathogenic fungi to penetrate through the cuticular barrier into the host plant during the initial stage of fungal infection. This chain is Cutinase (CUT1), found in Blumeria hordei (Barley powdery mildew).